The following is a 115-amino-acid chain: Chondroitin proteoglycan 8 (115 aa).

Positions 1-16 (MRPFILLALLVSVTVA) are cleaved as a signal peptide. The interval 33–96 (VRRTTRDASD…GSGAAEVTSV (64 aa)) is disordered. O-linked (Xyl...) (chondroitin sulfate) serine glycans are attached at residues Ser61, Ser63, Ser84, Ser88, and Ser109.

The protein is Chondroitin proteoglycan 8 of Caenorhabditis elegans.